The primary structure comprises 29 residues: Potassium channel toxin alpha-KTx 20.1 (29 aa).

Cystine bridges form between Cys2/Cys20, Cys7/Cys24, and Cys11/Cys26.

The protein belongs to the short scorpion toxin superfamily. Potassium channel inhibitor family. Alpha-KTx 20 subfamily. Expressed by the venom gland.

The protein resides in the secreted. In terms of biological role, reduces potassium currents through Kv1.2/KCNA2 and Kv1.3/KCNA3 voltage-gated potassium channels. The chain is Potassium channel toxin alpha-KTx 20.1 from Tityus trivittatus (Argentinean scorpion).